We begin with the raw amino-acid sequence, 109 residues long: Putative RNase MJ1380 (109 aa).

Residues R76 and H81 contribute to the active site. Positions 76-83 match the RX(4)HXY motif motif; it reads RNILIHKY. Y83 carries the post-translational modification O-di-AMP-tyrosine.

The protein belongs to the HepT RNase toxin family. Homodimer, probably forms a complex with cognate antitoxin MJ1379. Post-translationally, modified by cognate antitoxin MJ1379; probably at least 2 successive AMPylation events occur on Tyr-83.

In terms of biological role, probable toxic component of a putative type VII toxin-antitoxin (TA) system, probably an RNase. Probably neutralized by cognate antitoxin MJ1379. Neutralization may be due to AMPylation by antitoxin MJ1379. This chain is Putative RNase MJ1380, found in Methanocaldococcus jannaschii (strain ATCC 43067 / DSM 2661 / JAL-1 / JCM 10045 / NBRC 100440) (Methanococcus jannaschii).